A 59-amino-acid chain; its full sequence is U17-myrmicitoxin-Tb1f (59 aa).

The signal sequence occupies residues 1 to 27; sequence MEKNRTTTFSVYLTIILFLISTFITMV. Positions 28–31 are excised as a propeptide; sequence ITES. At His-58 the chain carries Histidine amide.

In terms of tissue distribution, expressed by the venom gland.

The protein localises to the secreted. This Tetramorium bicarinatum (Tramp ant) protein is U17-myrmicitoxin-Tb1f.